Consider the following 226-residue polypeptide: Orotate phosphoribosyltransferase 1 (226 aa).

Lys30 is a 5-phospho-alpha-D-ribose 1-diphosphate binding site. 38-39 is a binding site for orotate; that stretch reads FF. Residues 76–77, Arg106, Lys107, Lys110, His112, and 132–140 each bind 5-phospho-alpha-D-ribose 1-diphosphate; these read YK and DDVMTAGTA. 2 residues coordinate orotate: Thr136 and Arg164. Phosphoserine occurs at positions 213 and 225.

Belongs to the purine/pyrimidine phosphoribosyltransferase family. PyrE subfamily. As to quaternary structure, homodimer.

The enzyme catalyses orotidine 5'-phosphate + diphosphate = orotate + 5-phospho-alpha-D-ribose 1-diphosphate. It participates in pyrimidine metabolism; UMP biosynthesis via de novo pathway; UMP from orotate: step 1/2. Its function is as follows. Catalyzes the transfer of a ribosyl phosphate group from 5-phosphoribose 1-diphosphate to orotate, leading to the formation of orotidine monophosphate (OMP). This Saccharomyces cerevisiae (strain ATCC 204508 / S288c) (Baker's yeast) protein is Orotate phosphoribosyltransferase 1 (URA5).